Here is a 485-residue protein sequence, read N- to C-terminus: UDP-N-acetylmuramate--L-alanine ligase (485 aa).

An ATP-binding site is contributed by 129–135; it reads GTHGKTT.

Belongs to the MurCDEF family.

It is found in the cytoplasm. The enzyme catalyses UDP-N-acetyl-alpha-D-muramate + L-alanine + ATP = UDP-N-acetyl-alpha-D-muramoyl-L-alanine + ADP + phosphate + H(+). The protein operates within cell wall biogenesis; peptidoglycan biosynthesis. In terms of biological role, cell wall formation. The sequence is that of UDP-N-acetylmuramate--L-alanine ligase from Vibrio campbellii (strain ATCC BAA-1116).